The following is a 78-amino-acid chain: Small ribosomal subunit protein bS18 (78 aa).

It belongs to the bacterial ribosomal protein bS18 family. As to quaternary structure, part of the 30S ribosomal subunit. Forms a tight heterodimer with protein bS6.

In terms of biological role, binds as a heterodimer with protein bS6 to the central domain of the 16S rRNA, where it helps stabilize the platform of the 30S subunit. The protein is Small ribosomal subunit protein bS18 of Alkaliphilus oremlandii (strain OhILAs) (Clostridium oremlandii (strain OhILAs)).